Reading from the N-terminus, the 172-residue chain is Large ribosomal subunit protein uL10 (172 aa).

Belongs to the universal ribosomal protein uL10 family. As to quaternary structure, part of the ribosomal stalk of the 50S ribosomal subunit. The N-terminus interacts with L11 and the large rRNA to form the base of the stalk. The C-terminus forms an elongated spine to which L12 dimers bind in a sequential fashion forming a multimeric L10(L12)X complex.

Its function is as follows. Forms part of the ribosomal stalk, playing a central role in the interaction of the ribosome with GTP-bound translation factors. This chain is Large ribosomal subunit protein uL10, found in Rhizobium rhizogenes (strain K84 / ATCC BAA-868) (Agrobacterium radiobacter).